A 212-amino-acid polypeptide reads, in one-letter code: Leucine efflux protein (212 aa).

The next 6 helical transmembrane spans lie at 12-32 (TYLV…LFVL), 49-69 (GVFI…ATLI), 71-91 (TTPI…LYLG), 122-142 (ILSL…VQFI), 153-173 (FFIL…FLII), and 188-208 (LAKV…ARLA).

The protein belongs to the Rht family.

Its subcellular location is the cell inner membrane. The enzyme catalyses L-leucine(in) + H(+)(out) = L-leucine(out) + H(+)(in). Exporter of leucine. The protein is Leucine efflux protein (leuE) of Shigella sonnei (strain Ss046).